A 148-amino-acid polypeptide reads, in one-letter code: Large ribosomal subunit protein uL15 (148 aa).

The tract at residues 14-54 (HRKKRVGCGEGGGHGKTSGRGGKGQTARSGSSIRPGFEGGQ) is disordered. Over residues 21–37 (CGEGGGHGKTSGRGGKG) the composition is skewed to gly residues.

Belongs to the universal ribosomal protein uL15 family. As to quaternary structure, part of the 50S ribosomal subunit.

In terms of biological role, binds to the 23S rRNA. The sequence is that of Large ribosomal subunit protein uL15 from Opitutus terrae (strain DSM 11246 / JCM 15787 / PB90-1).